The chain runs to 273 residues: 2,3,4,5-tetrahydropyridine-2,6-dicarboxylate N-succinyltransferase (273 aa).

The substrate site is built by R104 and D141.

This sequence belongs to the transferase hexapeptide repeat family. Homotrimer.

The protein resides in the cytoplasm. It catalyses the reaction (S)-2,3,4,5-tetrahydrodipicolinate + succinyl-CoA + H2O = (S)-2-succinylamino-6-oxoheptanedioate + CoA. It functions in the pathway amino-acid biosynthesis; L-lysine biosynthesis via DAP pathway; LL-2,6-diaminopimelate from (S)-tetrahydrodipicolinate (succinylase route): step 1/3. The chain is 2,3,4,5-tetrahydropyridine-2,6-dicarboxylate N-succinyltransferase from Nitrosomonas europaea (strain ATCC 19718 / CIP 103999 / KCTC 2705 / NBRC 14298).